Consider the following 490-residue polypeptide: Sporulation-specific protein 1 (490 aa).

In terms of domain architecture, Protein kinase spans 18 to 272 (YSIQSCIGRG…AYNLLSFEFV (255 aa)). Residues 24–32 (IGRGNFGDV) and Lys-47 each bind ATP. The active-site Proton acceptor is Asp-141.

This sequence belongs to the protein kinase superfamily. STE Ser/Thr protein kinase family. STE20 subfamily.

The protein localises to the nucleus. The protein resides in the cytoplasm. The enzyme catalyses L-seryl-[protein] + ATP = O-phospho-L-seryl-[protein] + ADP + H(+). The catalysed reaction is L-threonyl-[protein] + ATP = O-phospho-L-threonyl-[protein] + ADP + H(+). In terms of biological role, serine/threonine protein kinase required for spore wall development. The polypeptide is Sporulation-specific protein 1 (SPS1) (Saccharomyces cerevisiae (strain ATCC 204508 / S288c) (Baker's yeast)).